Here is a 135-residue protein sequence, read N- to C-terminus: Putative pre-16S rRNA nuclease (135 aa).

This sequence belongs to the YqgF nuclease family.

The protein resides in the cytoplasm. Could be a nuclease involved in processing of the 5'-end of pre-16S rRNA. This chain is Putative pre-16S rRNA nuclease, found in Clostridium acetobutylicum (strain ATCC 824 / DSM 792 / JCM 1419 / IAM 19013 / LMG 5710 / NBRC 13948 / NRRL B-527 / VKM B-1787 / 2291 / W).